The sequence spans 113 residues: Protein Wnt-10 (113 aa).

S1 carries O-palmitoleoyl serine; by PORCN lipidation. C79 and C94 are disulfide-bonded.

The protein belongs to the Wnt family. In terms of processing, palmitoleoylation is required for efficient binding to frizzled receptors. Depalmitoleoylation leads to Wnt signaling pathway inhibition.

It localises to the secreted. It is found in the extracellular space. Its subcellular location is the extracellular matrix. Functionally, ligand for members of the frizzled family of seven transmembrane receptors. Probable developmental protein. May be a signaling molecule which affects the development of discrete regions of tissues. Is likely to signal over only few cell diameters. The protein is Protein Wnt-10 (WNT-10) of Eptatretus stoutii (Pacific hagfish).